Reading from the N-terminus, the 358-residue chain is tRNA-specific 2-thiouridylase MnmA (358 aa).

Residues 6-13 and L32 contribute to the ATP site; that span reads AMSGGVDS. Residue C101 is the Nucleophile of the active site. Residues C101 and C193 are joined by a disulfide bond. G125 serves as a coordination point for ATP. Residues 143 to 145 form an interaction with tRNA region; sequence KDQ. C193 acts as the Cysteine persulfide intermediate in catalysis.

Belongs to the MnmA/TRMU family.

It is found in the cytoplasm. The enzyme catalyses S-sulfanyl-L-cysteinyl-[protein] + uridine(34) in tRNA + AH2 + ATP = 2-thiouridine(34) in tRNA + L-cysteinyl-[protein] + A + AMP + diphosphate + H(+). Catalyzes the 2-thiolation of uridine at the wobble position (U34) of tRNA, leading to the formation of s(2)U34. The polypeptide is tRNA-specific 2-thiouridylase MnmA (Mycobacterium leprae (strain Br4923)).